A 58-amino-acid polypeptide reads, in one-letter code: U11-ctenitoxin-Pn1b (58 aa).

Intrachain disulfides connect cysteine 2–cysteine 16, cysteine 9–cysteine 22, cysteine 15–cysteine 40, cysteine 24–cysteine 38, and cysteine 48–cysteine 55.

As to expression, expressed by the venom gland.

The protein resides in the secreted. Functionally, non-toxic to mice. This is U11-ctenitoxin-Pn1b from Phoneutria nigriventer (Brazilian armed spider).